We begin with the raw amino-acid sequence, 633 residues long: MSLQPQAETLSFEAEVKQLLHLVAHSLYSNKEIFLRELISNSSDAADKLRYQALSDAALYENDADLKIWIDFDKDNRTITIRDNGIGMSREEVIENLGTIAKSGTRAFRELLAEKKAEDSQLIGQFGVGFYSAFIVADRVVVRTRRAGMKADQGVEWESTGEGEYTLKNIDKPTRGTEVVLHLKESEEEFLDPLRLRAIITKYSDHILLPIVMKKIKTSGADDEDKNETPEEEVVNRANALWVLPKDKIKDEEYKELYKHIAHDFEDPLAWVHNKVEGKLEYTTLLYIPARAPFDLWNREGQRGLKLYVKRIFIMDDAEHFMPMYLRFVKGIVDSNDLPLNISRELLQSNEVINKIKAGCVKRILSLLEDLAKNDKEKYASFWKAFGQVLKEGPAEDFANRDRIANLLRFASTHNDTDEQNVSLQDYISRMKPEQNKIYYIVADTYTSAKNSPLLEVFRKKDIEVLLMSDRVDEWLVAHLNEFEGKSLQSIAKGTLDLGDLEKEEKVETEKFEKDFDELLKQFKEVLGEKIKDVRITHRLTDSPTCVVFDENEMSGHLQRLLIQTGQDFMQAKPILEINPSHPLILRVKNESDKTRFNRWADLLLNQALLAEGEQLKDPASFVKGLNELLLDS.

The segment at 1–344 (MSLQPQAETL…SNDLPLNISR (344 aa)) is a; substrate-binding. The segment at 345-560 (ELLQSNEVIN…ENEMSGHLQR (216 aa)) is b. The tract at residues 561 to 633 (LLIQTGQDFM…KGLNELLLDS (73 aa)) is c.

Belongs to the heat shock protein 90 family. As to quaternary structure, homodimer.

The protein resides in the cytoplasm. Its function is as follows. Molecular chaperone. Has ATPase activity. In Coxiella burnetii (strain RSA 493 / Nine Mile phase I), this protein is Chaperone protein HtpG.